A 292-amino-acid polypeptide reads, in one-letter code: Putative ribonuclease 3 (292 aa).

One can recognise an RNase III domain in the interval 32–158 (LGMSDEYIPY…FFGATEWLID (127 aa)). In terms of domain architecture, DRBM spans 204–276 (DAKTRFNEVI…ASRALETLAL (73 aa)).

Belongs to the IIV-6 142R family.

The enzyme catalyses Endonucleolytic cleavage to 5'-phosphomonoester.. Functionally, digests double-stranded RNA. This chain is Putative ribonuclease 3, found in Acheta domesticus (House cricket).